The primary structure comprises 208 residues: Vacuolar ATPase assembly protein VMA12 (208 aa).

Ala2 is modified (N-acetylalanine). 2 helical membrane-spanning segments follow: residues 146–166 (LVIT…CTYL) and 179–199 (VLAA…VMVR).

In terms of assembly, accessory component of the multisubunit proton-transporting vacuolar (V)-ATPase protein pump.

It is found in the cytoplasmic vesicle. It localises to the COPI-coated vesicle membrane. Its subcellular location is the endoplasmic reticulum-Golgi intermediate compartment membrane. The protein resides in the endoplasmic reticulum membrane. Its function is as follows. Accessory component of the proton-transporting vacuolar (V)-ATPase protein pump involved in intracellular iron homeostasis. In aerobic conditions, required for intracellular iron homeostasis, thus triggering the activity of Fe(2+) prolyl hydroxylase (PHD) enzymes, and leading to HIF1A hydroxylation and subsequent proteasomal degradation. Necessary for endolysosomal acidification and lysosomal degradation. May be involved in Golgi homeostasis. Binds 20(S)-hydroxycholesterol (20(S)-OHC). The polypeptide is Vacuolar ATPase assembly protein VMA12 (Homo sapiens (Human)).